The chain runs to 227 residues: Type II restriction enzyme ScaI (227 aa).

The disordered stretch occupies residues 12-35 (EARVGTRTGGPAMRPKTSDSPYFG).

The enzyme catalyses Endonucleolytic cleavage of DNA to give specific double-stranded fragments with terminal 5'-phosphates.. In terms of biological role, a P subtype restriction enzyme that recognizes the double-stranded sequence 5'-AGTACT-3' and cleaves after T-3. The protein is Type II restriction enzyme ScaI of Streptomyces caespitosus.